A 445-amino-acid polypeptide reads, in one-letter code: Bifunctional protein GlmU (445 aa).

Residues 1 to 218 (MRALVLAAGK…LLEITGVNTR (218 aa)) are pyrophosphorylase. UDP-N-acetyl-alpha-D-glucosamine contacts are provided by residues 6–9 (LAAG), Lys20, Gln69, 74–75 (GT), 96–98 (YGD), Gly134, Glu147, Asn162, and Asn216. A Mg(2+)-binding site is contributed by Asp98. Asn216 contacts Mg(2+). A linker region spans residues 219–239 (KTLVWLEEQLRMRKIEELLEN). The tract at residues 240–445 (GVTILDPATT…GWVLKKRKEE (206 aa)) is N-acetyltransferase. UDP-N-acetyl-alpha-D-glucosamine is bound by residues Arg321 and Lys339. The active-site Proton acceptor is the His351. Residues Tyr354 and Asn365 each coordinate UDP-N-acetyl-alpha-D-glucosamine. Acetyl-CoA is bound by residues Ala368, 374-375 (NY), Ser393, Ala411, and Arg428.

The protein in the N-terminal section; belongs to the N-acetylglucosamine-1-phosphate uridyltransferase family. This sequence in the C-terminal section; belongs to the transferase hexapeptide repeat family. Homotrimer. Mg(2+) is required as a cofactor.

It is found in the cytoplasm. The catalysed reaction is alpha-D-glucosamine 1-phosphate + acetyl-CoA = N-acetyl-alpha-D-glucosamine 1-phosphate + CoA + H(+). It catalyses the reaction N-acetyl-alpha-D-glucosamine 1-phosphate + UTP + H(+) = UDP-N-acetyl-alpha-D-glucosamine + diphosphate. The protein operates within nucleotide-sugar biosynthesis; UDP-N-acetyl-alpha-D-glucosamine biosynthesis; N-acetyl-alpha-D-glucosamine 1-phosphate from alpha-D-glucosamine 6-phosphate (route II): step 2/2. It functions in the pathway nucleotide-sugar biosynthesis; UDP-N-acetyl-alpha-D-glucosamine biosynthesis; UDP-N-acetyl-alpha-D-glucosamine from N-acetyl-alpha-D-glucosamine 1-phosphate: step 1/1. Its pathway is bacterial outer membrane biogenesis; LPS lipid A biosynthesis. Catalyzes the last two sequential reactions in the de novo biosynthetic pathway for UDP-N-acetylglucosamine (UDP-GlcNAc). The C-terminal domain catalyzes the transfer of acetyl group from acetyl coenzyme A to glucosamine-1-phosphate (GlcN-1-P) to produce N-acetylglucosamine-1-phosphate (GlcNAc-1-P), which is converted into UDP-GlcNAc by the transfer of uridine 5-monophosphate (from uridine 5-triphosphate), a reaction catalyzed by the N-terminal domain. The sequence is that of Bifunctional protein GlmU from Thermotoga maritima (strain ATCC 43589 / DSM 3109 / JCM 10099 / NBRC 100826 / MSB8).